The sequence spans 673 residues: Outer spore wall assembly protein SHE10 (673 aa).

The signal sequence occupies residues 1-24 (MRRVRGVGNLLVTILVVLIGFKQA). Residues 503–568 (ILRSQANIAF…LALEQGQGQE (66 aa)) adopt a coiled-coil conformation. 2 disordered regions span residues 530 to 551 (LEQE…AENE) and 587 to 673 (TPLG…SQAN). 2 stretches are compositionally biased toward acidic residues: residues 593 to 605 (DNTD…DDAD) and 612 to 629 (GDSE…EEDA). A coiled-coil region spans residues 617 to 647 (NFYDSYEGDEEDASRELERLERESAERETLD). The segment covering 630-673 (SRELERLERESAERETLDRLELGQRQKLQEEQHRDELHHSSQAN) has biased composition (basic and acidic residues).

This sequence belongs to the SHE10 family. Component of the mitochondria-localized RNase mitochondrial RNA-processing (RNase MRP) composed of one single RNA encoded by the NME1 gene and at least 31 proteins. Absent in the nucleus-localized RNase MRP (NuMRP).

Its subcellular location is the mitochondrion. Functionally, involved in spore wall assembly. May be a component of the mitochondrial RNase MRP (MtMRP), a ribonucleoprotein endoribonuclease involved in the cleaving RNA transcripts to generate primers for DNA replication in mitochondria. In Lachancea thermotolerans (strain ATCC 56472 / CBS 6340 / NRRL Y-8284) (Yeast), this protein is Outer spore wall assembly protein SHE10.